The sequence spans 664 residues: Armadillo repeat protein involved in nucleocytoplasmic transport Syo2 (664 aa).

The ARM repeat unit spans residues 77–119; it reads GLVSKLIDRISDDSVEVVVEATGALRNLAIEEGYSICMDMYRK.

It belongs to the nuclear import and ribosome assembly adapter family. Forms a heterotrimeric complex with rpl5 and rpl11a or rpl11b; interaction of this complex with kap104 allows the nuclear import of the heterotrimer. Component of a hexameric 5S RNP precursor complex; this complex acts as a precursor for ribosome assembly.

Its subcellular location is the cytoplasm. The protein resides in the nucleus. Functionally, nuclear import adapter that specifically recruits the two functionally and topologically linked ribosomal proteins rpl5 and rpl11 (encoded by rpl11a and rpl11b). Guarantees that this cargo pair remains bound together from the time of synthesis in the cytoplasm until delivery to the nascent 5S rRNA in the nucleus. The sequence is that of Armadillo repeat protein involved in nucleocytoplasmic transport Syo2 from Schizosaccharomyces pombe (strain 972 / ATCC 24843) (Fission yeast).